The chain runs to 239 residues: Ribosomal RNA small subunit methyltransferase G (239 aa).

S-adenosyl-L-methionine-binding positions include Gly-79, Phe-84, 130-131 (AE), and Arg-149.

The protein belongs to the methyltransferase superfamily. RNA methyltransferase RsmG family.

The protein resides in the cytoplasm. In terms of biological role, specifically methylates the N7 position of a guanine in 16S rRNA. This is Ribosomal RNA small subunit methyltransferase G from Pelotomaculum thermopropionicum (strain DSM 13744 / JCM 10971 / SI).